The chain runs to 820 residues: Leucine--tRNA ligase (820 aa).

A 'HIGH' region motif is present at residues 40-51 (PYPSGAGLHVGH). The 'KMSKS' region signature appears at 601–605 (KMSKS). Lys604 contributes to the ATP binding site.

The protein belongs to the class-I aminoacyl-tRNA synthetase family.

The protein resides in the cytoplasm. The enzyme catalyses tRNA(Leu) + L-leucine + ATP = L-leucyl-tRNA(Leu) + AMP + diphosphate. In Chlamydia caviae (strain ATCC VR-813 / DSM 19441 / 03DC25 / GPIC) (Chlamydophila caviae), this protein is Leucine--tRNA ligase.